The sequence spans 327 residues: MRFPPLLFFQDSEAVKRIANSVRGTKDDDAEIKDHSMRFIRNAISGDQQKEILNVDMLRYIAWVLVALNENIVTARTVIRERDAVEDALKNQQPEDIENFADDLKINMKYNRDLERFEIGVFDFVKYASRVTGSQYRLSNQSVIKGIVYCQKDVAIKILRESFVSNMFKVIDSIDQTTASPVLSDQTDSINELREFYKKSVYAKLTIGRGNTKAFPPCMKEIIRNLHEGINVPHMGRLAIASFLHKVGYTEDEIVEYFRNAPDFDESITRYQIKHLSGEISGVEYSPPKCETMRSNHLCFMDDDKLCHQDWMKHPLTYYEVKSRRLG.

Residues C218, C290, C299, and C307 each coordinate [4Fe-4S] cluster.

The protein belongs to the eukaryotic-type primase large subunit family. As to quaternary structure, heterodimer of a small subunit (PriS) and a large subunit (PriL). The cofactor is [4Fe-4S] cluster.

Functionally, regulatory subunit of DNA primase, an RNA polymerase that catalyzes the synthesis of short RNA molecules used as primers for DNA polymerase during DNA replication. Stabilizes and modulates the activity of the small subunit, increasing the rate of DNA synthesis, and conferring RNA synthesis capability. The DNA polymerase activity may enable DNA primase to also catalyze primer extension after primer synthesis. May also play a role in DNA repair. The chain is DNA primase large subunit PriL from Thermoplasma volcanium (strain ATCC 51530 / DSM 4299 / JCM 9571 / NBRC 15438 / GSS1).